Here is a 359-residue protein sequence, read N- to C-terminus: Histidinol-phosphate aminotransferase (359 aa).

Lys217 is subject to N6-(pyridoxal phosphate)lysine.

Belongs to the class-II pyridoxal-phosphate-dependent aminotransferase family. Histidinol-phosphate aminotransferase subfamily. In terms of assembly, homodimer. Pyridoxal 5'-phosphate serves as cofactor.

The enzyme catalyses L-histidinol phosphate + 2-oxoglutarate = 3-(imidazol-4-yl)-2-oxopropyl phosphate + L-glutamate. It functions in the pathway amino-acid biosynthesis; L-histidine biosynthesis; L-histidine from 5-phospho-alpha-D-ribose 1-diphosphate: step 7/9. This chain is Histidinol-phosphate aminotransferase, found in Salmonella typhi.